Reading from the N-terminus, the 545-residue chain is ATP synthase subunit alpha (545 aa).

An ATP-binding site is contributed by 172–179 (GDRKTGKT).

It belongs to the ATPase alpha/beta chains family. F-type ATPases have 2 components, CF(1) - the catalytic core - and CF(0) - the membrane proton channel. CF(1) has five subunits: alpha(3), beta(3), gamma(1), delta(1), epsilon(1). CF(0) has three main subunits: a(1), b(2) and c(9-12). The alpha and beta chains form an alternating ring which encloses part of the gamma chain. CF(1) is attached to CF(0) by a central stalk formed by the gamma and epsilon chains, while a peripheral stalk is formed by the delta and b chains.

It is found in the cell membrane. The catalysed reaction is ATP + H2O + 4 H(+)(in) = ADP + phosphate + 5 H(+)(out). Its function is as follows. Produces ATP from ADP in the presence of a proton gradient across the membrane. The alpha chain is a regulatory subunit. The sequence is that of ATP synthase subunit alpha from Corynebacterium urealyticum (strain ATCC 43042 / DSM 7109).